The chain runs to 431 residues: tRNA(Ile)-lysidine synthase (431 aa).

Residue 26 to 31 (SGGVDS) coordinates ATP.

The protein belongs to the tRNA(Ile)-lysidine synthase family.

The protein localises to the cytoplasm. The enzyme catalyses cytidine(34) in tRNA(Ile2) + L-lysine + ATP = lysidine(34) in tRNA(Ile2) + AMP + diphosphate + H(+). Its function is as follows. Ligates lysine onto the cytidine present at position 34 of the AUA codon-specific tRNA(Ile) that contains the anticodon CAU, in an ATP-dependent manner. Cytidine is converted to lysidine, thus changing the amino acid specificity of the tRNA from methionine to isoleucine. This is tRNA(Ile)-lysidine synthase from Wolbachia pipientis wMel.